The following is a 332-amino-acid chain: Ribose-phosphate pyrophosphokinase (332 aa).

An ATP-binding site is contributed by 57–59 (DGE). 2 residues coordinate Mg(2+): His150 and Asp189. The active site involves Lys213. D-ribose 5-phosphate is bound by residues Arg215, Asp239, and 243–247 (DTAGT).

It belongs to the ribose-phosphate pyrophosphokinase family. Class I subfamily. Homohexamer. Requires Mg(2+) as cofactor.

It localises to the cytoplasm. It catalyses the reaction D-ribose 5-phosphate + ATP = 5-phospho-alpha-D-ribose 1-diphosphate + AMP + H(+). Its pathway is metabolic intermediate biosynthesis; 5-phospho-alpha-D-ribose 1-diphosphate biosynthesis; 5-phospho-alpha-D-ribose 1-diphosphate from D-ribose 5-phosphate (route I): step 1/1. In terms of biological role, involved in the biosynthesis of the central metabolite phospho-alpha-D-ribosyl-1-pyrophosphate (PRPP) via the transfer of pyrophosphoryl group from ATP to 1-hydroxyl of ribose-5-phosphate (Rib-5-P). This chain is Ribose-phosphate pyrophosphokinase, found in Gloeobacter violaceus (strain ATCC 29082 / PCC 7421).